The chain runs to 968 residues: Isoleucine--tRNA ligase (968 aa).

The short motif at 68-78 (PYANGALHMGH) is the 'HIGH' region element. Residue glutamate 584 coordinates L-isoleucyl-5'-AMP. The 'KMSKS' region signature appears at 625 to 629 (KMSKS). Lysine 628 provides a ligand contact to ATP. 4 residues coordinate Zn(2+): cysteine 938, cysteine 941, cysteine 958, and cysteine 961.

Belongs to the class-I aminoacyl-tRNA synthetase family. IleS type 1 subfamily. In terms of assembly, monomer. Requires Zn(2+) as cofactor.

It localises to the cytoplasm. The catalysed reaction is tRNA(Ile) + L-isoleucine + ATP = L-isoleucyl-tRNA(Ile) + AMP + diphosphate. Functionally, catalyzes the attachment of isoleucine to tRNA(Ile). As IleRS can inadvertently accommodate and process structurally similar amino acids such as valine, to avoid such errors it has two additional distinct tRNA(Ile)-dependent editing activities. One activity is designated as 'pretransfer' editing and involves the hydrolysis of activated Val-AMP. The other activity is designated 'posttransfer' editing and involves deacylation of mischarged Val-tRNA(Ile). The sequence is that of Isoleucine--tRNA ligase from Prochlorococcus marinus (strain MIT 9313).